The chain runs to 274 residues: Thiamine kinase (274 aa).

Belongs to the thiamine kinase family.

The catalysed reaction is thiamine + ATP = thiamine phosphate + ADP + H(+). The protein operates within cofactor biosynthesis; thiamine diphosphate biosynthesis; thiamine phosphate from thiamine: step 1/1. Catalyzes the ATP-dependent phosphorylation of thiamine to thiamine phosphate. Is involved in thiamine salvage. This Salmonella newport (strain SL254) protein is Thiamine kinase.